A 30-amino-acid chain; its full sequence is Vitri peptide A (30 aa).

A cross-link (cyclopeptide (Gly-Asn)) is located at residues 1–30 (GIPCGESCVWIPCITSAIGCSCKSKVCYRN). Cystine bridges form between Cys4-Cys20, Cys8-Cys22, and Cys13-Cys27.

This is a cyclic peptide.

In terms of biological role, probably participates in a plant defense mechanism. Has strong cytotoxic activity against human lymphoma U-937 GTB and human myeloma RPMI-8226/s cell lines. This Viola arvensis (European field pansy) protein is Vitri peptide A.